A 60-amino-acid chain; its full sequence is Protein translocase subunit SecE (60 aa).

A helical membrane pass occupies residues 31-51 (IIVVSTVIFFLVFFYALDIGI).

Belongs to the SecE/SEC61-gamma family. As to quaternary structure, component of the Sec protein translocase complex. Heterotrimer consisting of SecY, SecE and SecG subunits. The heterotrimers can form oligomers, although 1 heterotrimer is thought to be able to translocate proteins. Interacts with the ribosome. Interacts with SecDF, and other proteins may be involved. Interacts with SecA.

It is found in the cell membrane. Its function is as follows. Essential subunit of the Sec protein translocation channel SecYEG. Clamps together the 2 halves of SecY. May contact the channel plug during translocation. The sequence is that of Protein translocase subunit SecE from Staphylococcus epidermidis (strain ATCC 35984 / DSM 28319 / BCRC 17069 / CCUG 31568 / BM 3577 / RP62A).